The sequence spans 232 residues: Large ribosomal subunit protein uL1 (232 aa).

The protein belongs to the universal ribosomal protein uL1 family. In terms of assembly, part of the 50S ribosomal subunit.

In terms of biological role, binds directly to 23S rRNA. The L1 stalk is quite mobile in the ribosome, and is involved in E site tRNA release. Its function is as follows. Protein L1 is also a translational repressor protein, it controls the translation of the L11 operon by binding to its mRNA. This is Large ribosomal subunit protein uL1 from Xanthomonas oryzae pv. oryzae (strain MAFF 311018).